The primary structure comprises 431 residues: Foot protein 1 variant 2 (431 aa).

Residues 1–20 (MARNMNILTLFAVLLGSASA) form the signal peptide. 3',4'-dihydroxyphenylalanine is present on Y22. P33 carries the 4-hydroxyproline modification. An A-1; approximate repeat occupies 41-50 (VPPPAWTAWK). The segment at 41 to 270 (VPPPAWTAWK…APPPAWTAWK (230 aa)) is 13 X 10 AA A-P-P-P-A-W-T-A-W-K. A 7'-hydroxytryptophan mark is found at W46, W49, W56, and W59. Residues W46, W49, W56, and W59 are each glycosylated (C-linked (Man) hydroxytryptophan). The stretch at 51–60 (AHPPAWTAWK) is one A-2; approximate repeat. Residues 61–70 (ATPKPWTAWK) form a B-1 repeat. Positions 61 to 310 (ATPKPWTAWK…ATPKPWTAWR (250 aa)) are 27 X 10 AA A-T-P-K-P-W-T-A-W-K. P65 carries the 4-hydroxyproline modification. A glycan (C-linked (Man) tryptophan) is linked at W66. Position 69 is a 7'-hydroxytryptophan (W69). C-linked (Man) hydroxytryptophan glycosylation is present at W69. An A-3 repeat occupies 71–80 (APPPAWTAWK). A 4-hydroxyproline mark is found at P72, P73, and P74. W76 and W79 each carry 7'-hydroxytryptophan. Residues W76 and W79 are each glycosylated (C-linked (Man) hydroxytryptophan). A B-2 repeat occupies 81–90 (ATPKPWTAWK). The residue at position 85 (P85) is a 4-hydroxyproline. C-linked (Man) tryptophan glycosylation is present at W86. Residue W89 is modified to 7'-hydroxytryptophan. W89 is a glycosylation site (C-linked (Man) hydroxytryptophan). One copy of the A-4; approximate repeat lies at 91–100 (APPPTWTAWK). Residues P92, P93, and P94 each carry the 4-hydroxyproline modification. 7'-hydroxytryptophan is present on residues W96 and W99. C-linked (Man) hydroxytryptophan glycans are attached at residues W96 and W99. A B-3 repeat occupies 101–110 (ATPKPWTAWK). P105 carries the 4-hydroxyproline modification. W106 carries a C-linked (Man) tryptophan glycan. W109 carries the 7'-hydroxytryptophan modification. A glycan (C-linked (Man) hydroxytryptophan) is linked at W109. An A-5; approximate repeat occupies 111 to 120 (APPPVWTAWK). 4-hydroxyproline occurs at positions 112, 113, and 114. W116 and W119 each carry 7'-hydroxytryptophan. C-linked (Man) hydroxytryptophan glycans are attached at residues W116 and W119. One copy of the B-4; approximate repeat lies at 121–130 (ATPKPRTAWK). P125 is modified (4-hydroxyproline). Position 129 is a 7'-hydroxytryptophan (W129). W129 is a glycosylation site (C-linked (Man) hydroxytryptophan). The A-6; approximate repeat unit spans residues 131–140 (APPPTWTAWK). 4-hydroxyproline is present on residues P132, P133, and P134. 7'-hydroxytryptophan occurs at positions 136 and 139. W136 and W139 each carry a C-linked (Man) hydroxytryptophan glycan. The stretch at 141–150 (AAPKPWTAWK) is one B-5; approximate repeat. P145 carries the 4-hydroxyproline modification. A glycan (C-linked (Man) tryptophan) is linked at W146. 7'-hydroxytryptophan is present on W149. W149 carries C-linked (Man) hydroxytryptophan glycosylation. Residues 151–160 (ATPKPWTAWK) form a B-6 repeat. 4-hydroxyproline is present on P155. The C-linked (Man) tryptophan glycan is linked to W156. At W159 the chain carries 7'-hydroxytryptophan. W159 is a glycosylation site (C-linked (Man) hydroxytryptophan). The A-7 repeat unit spans residues 161-170 (APPPAWTAWK). 4-hydroxyproline occurs at positions 162, 163, and 164. A 7'-hydroxytryptophan mark is found at W166 and W169. C-linked (Man) hydroxytryptophan glycans are attached at residues W166 and W169. One copy of the B-7 repeat lies at 171 to 180 (ATPKPWTAWK). P175 bears the 4-hydroxyproline mark. The C-linked (Man) tryptophan glycan is linked to W176. W179 is subject to 7'-hydroxytryptophan. W179 carries a C-linked (Man) hydroxytryptophan glycan. The B-8 repeat unit spans residues 181–190 (ATPKPWTAWK). P185 carries the 4-hydroxyproline modification. C-linked (Man) tryptophan glycosylation is present at W186. A 7'-hydroxytryptophan modification is found at W189. A C-linked (Man) hydroxytryptophan glycan is attached at W189. The B-9 repeat unit spans residues 191–200 (ATPKPWTAWK). Residue P195 is modified to 4-hydroxyproline. C-linked (Man) tryptophan glycosylation is present at W196. W199 bears the 7'-hydroxytryptophan mark. A C-linked (Man) hydroxytryptophan glycan is attached at W199. A B-10; approximate repeat occupies 201–210 (ATPKPWTVWK). Position 205 is a 4-hydroxyproline (P205). A C-linked (Man) tryptophan glycan is attached at W206. Position 209 is a 7'-hydroxytryptophan (W209). Residue W209 is glycosylated (C-linked (Man) hydroxytryptophan). Residues 211–220 (ATPKPWTAWK) form a B-11 repeat. P215 carries the 4-hydroxyproline modification. C-linked (Man) tryptophan glycosylation is present at W216. Position 219 is a 7'-hydroxytryptophan (W219). C-linked (Man) hydroxytryptophan glycosylation occurs at W219. Residues 221–230 (APPPAWTAWK) form an A-8 repeat. 3 positions are modified to 4-hydroxyproline: P222, P223, and P224. A 7'-hydroxytryptophan mark is found at W226 and W229. W226 and W229 each carry a C-linked (Man) hydroxytryptophan glycan. The stretch at 231-240 (ATPKPWTAWK) is one B-12 repeat. P235 carries the 4-hydroxyproline modification. W236 carries C-linked (Man) tryptophan glycosylation. W239 bears the 7'-hydroxytryptophan mark. W239 is a glycosylation site (C-linked (Man) hydroxytryptophan). Residues 241–250 (APPPAWTAWK) form an A-9 repeat. A 4-hydroxyproline mark is found at P242, P243, and P244. 7'-hydroxytryptophan occurs at positions 246 and 249. Residues W246 and W249 are each glycosylated (C-linked (Man) hydroxytryptophan). One copy of the B-13 repeat lies at 251-260 (ATPKPWTAWK). Residue P255 is modified to 4-hydroxyproline. W256 carries C-linked (Man) tryptophan glycosylation. W259 is subject to 7'-hydroxytryptophan. W259 carries a C-linked (Man) hydroxytryptophan glycan. The A-10 repeat unit spans residues 261–270 (APPPAWTAWK). 4-hydroxyproline occurs at positions 262, 263, and 264. A 7'-hydroxytryptophan mark is found at W266 and W269. 2 C-linked (Man) hydroxytryptophan glycosylation sites follow: W266 and W269. Residues 271-280 (ATPKPWTAWK) form a B-14 repeat. Position 275 is a 4-hydroxyproline (P275). C-linked (Man) tryptophan glycosylation is present at W276. At W279 the chain carries 7'-hydroxytryptophan. A glycan (C-linked (Man) hydroxytryptophan) is linked at W279. The B-15 repeat unit spans residues 281–290 (ATPKPWTAWK). Residue P285 is modified to 4-hydroxyproline. C-linked (Man) tryptophan glycosylation occurs at W286. A 7'-hydroxytryptophan modification is found at W289. A C-linked (Man) hydroxytryptophan glycan is attached at W289. The stretch at 291 to 300 (ATPKPWTAWK) is one B-16 repeat. A 4-hydroxyproline modification is found at P295. W296 carries a C-linked (Man) tryptophan glycan. A 7'-hydroxytryptophan modification is found at W299. The C-linked (Man) hydroxytryptophan glycan is linked to W299. A B-17; approximate repeat occupies 301–310 (ATPKPWTAWR). The residue at position 305 (P305) is a 4-hydroxyproline. A glycan (C-linked (Man) tryptophan) is linked at W306. At W309 the chain carries 7'-hydroxytryptophan. A glycan (C-linked (Man) hydroxytryptophan) is linked at W309. Residues 322–377 (GHGYGGYGKPGKPGKPGSKGPRGPAGPPGATGKTGRTGATGKRGPPGYPGKPGVPG) are disordered. Over residues 323–332 (HGYGGYGKPG) the composition is skewed to gly residues. A Collagen-like domain is found at 329–380 (GKPGKPGKPGSKGPRGPAGPPGATGKTGRTGATGKRGPPGYPGKPGVPGRNG). Positions 336-366 (KPGSKGPRGPAGPPGATGKTGRTGATGKRGP) are enriched in low complexity. 4-hydroxyproline occurs at positions 367, 370, and 376.

Produced by the byssal gland.

It localises to the secreted. Functionally, provides adhesiveness to the mussel's foot. Mussels produce one of the strongest water insoluble glues. The mussel's adhesive is a bundle of threads, called a byssus, formed by a fibrous collagenous core coated with adhesive proteins. This chain is Foot protein 1 variant 2, found in Perna viridis (Asian green mussel).